The chain runs to 360 residues: Inward rectifier potassium channel 13 (360 aa).

Residues methionine 1 to aspartate 50 lie on the Cytoplasmic side of the membrane. Residues methionine 51–alanine 77 traverse the membrane as a helical segment. Residues valine 78–serine 105 lie on the Extracellular side of the membrane. The segment at residues phenylalanine 106 to tyrosine 122 is an intramembrane region (helical; Pore-forming). Residues threonine 119–threonine 124 carry the Selectivity filter motif. The Extracellular portion of the chain corresponds to glycine 123–cysteine 131. The helical transmembrane segment at proline 132–valine 157 threads the bilayer. At alanine 158–glutamate 360 the chain is on the cytoplasmic side. Serine 287 carries the post-translational modification Phosphoserine; by PKA.

The protein belongs to the inward rectifier-type potassium channel (TC 1.A.2.1) family. KCNJ13 subfamily. As to quaternary structure, homotetramer. Interacts with RAB28; the interaction may facilitate cone outer segments phagocytosis. In terms of processing, phosphorylation at Ser-287 by PKA increases ionic currents. As to expression, expressed in retina.

The protein resides in the membrane. It is found in the cell membrane. The catalysed reaction is K(+)(in) = K(+)(out). With respect to regulation, inhibited by Ba(2+) and Cs(+), although sensitivity to those inhibitors is much lower than in other Kir channels. Functionally, inward rectifier potassium channels are characterized by a greater tendency to allow potassium to flow into the cell rather than out of it. Their voltage dependence is regulated by the concentration of extracellular potassium; as external potassium is raised, the voltage range of the channel opening shifts to more positive voltages. The inward rectification is mainly due to the blockage of outward current by internal magnesium. KCNJ13 has a very low single channel conductance, low sensitivity to block by external barium and cesium, and no dependence of its inward rectification properties on the internal blocking particle magnesium. This chain is Inward rectifier potassium channel 13, found in Mus musculus (Mouse).